We begin with the raw amino-acid sequence, 354 residues long: Guanine nucleotide-binding protein G(i) subunit alpha-1 (354 aa).

G2 carries the N-myristoyl glycine lipid modification. C3 is lipidated: S-palmitoyl cysteine. The 323-residue stretch at 32-354 folds into the G-alpha domain; it reads REVKLLLLGA…KNNLKDCGLF (323 aa). The tract at residues 35 to 48 is G1 motif; sequence KLLLLGAGESGKST. Residues 43-48, 150-151, and 175-178 each bind GTP; these read ESGKST, DS, and LRTR. S47 serves as a coordination point for Mg(2+). A G2 motif region spans residues 173–181; it reads DVLRTRVKT. T181 serves as a coordination point for Mg(2+). The tract at residues 196–205 is G3 motif; sequence FKMFDVGGQR. Residues 200 to 204, 269 to 272, and A326 contribute to the GTP site; these read DVGGQ and NKKD. Residues 265–272 are G4 motif; sequence ILFLNKKD. The segment at 324-329 is G5 motif; sequence TCATDT.

It belongs to the G-alpha family. G(i/o/t/z) subfamily. As to quaternary structure, heterotrimeric G proteins are composed of 3 units; alpha, beta and gamma. The alpha chain contains the guanine nucleotide binding site. Part of a spindle orientation complex at least composed of GNAI1, GPSM2 and NUMA1. Identified in complex with the beta subunit GNB1 and the gamma subunit GNG1. Identified in complex with the beta subunit GNB1 and the gamma subunit GNG2. Component of the TAS2R14-GNAI1 complex, consisting of TAS2R14, GNAI1, GNB1 and GNG2; within the complex interacts with TAS2R14; this complex plays a role in the perception of bitterness. GTP binding causes dissociation of the heterotrimer, liberating the individual subunits so that they can interact with downstream effector proteins. Interacts (GDP-bound form) with GPSM1; this inhibits guanine nucleotide exchange and GTP binding. Interacts (GDP-bound form) with GPSM2 (via GoLoco domains); this inhibits guanine nucleotide exchange. Interacts with RGS10; this strongly enhances GTP hydrolysis. Interacts with RGS1 and RGS16; this strongly enhances GTPase activity. Interacts with RGS4. Interacts with RGS12. Interacts (via active GTP- or inactive GDP-bound forms) with RGS14 (via RGS and GoLoco domains). Interacts with RGS3, RGS6, RGS7, RGS8, RGS17, RGS18 and RGS20 (in vitro). Interacts (GDP-bound form) with RIC8A (via C-terminus); promoting GNAI1 folding and association with the plasma membrane. Interacts (inactive GDP-bound form) with NUCB1 (via GBA motif); the interaction leads to activation of GNAI1. Interacts (inactive GDP-bound form) with CCDC88C/DAPLE (via GBA motif); the interaction leads to activation of GNAI1. Interacts (inactive GDP-bound form) with CCDC8A/GIV (via GBA motif). Interacts with GPR15. In terms of processing, myristoylation at Gly-2 is required for membrane anchoring before palmitoylation. Post-translationally, palmitoylation at Cys-3 varies with membrane lipid composition.

The protein localises to the nucleus. The protein resides in the cytoplasm. Its subcellular location is the cell membrane. It is found in the cytoskeleton. It localises to the microtubule organizing center. The protein localises to the centrosome. The protein resides in the cell cortex. Its subcellular location is the membrane. In terms of biological role, guanine nucleotide-binding proteins (G proteins) function as transducers downstream of G protein-coupled receptors (GPCRs) in numerous signaling cascades. The alpha chain contains the guanine nucleotide binding site and alternates between an active, GTP-bound state and an inactive, GDP-bound state. Signaling by an activated GPCR promotes GDP release and GTP binding. The alpha subunit has a low GTPase activity that converts bound GTP to GDP, thereby terminating the signal. Both GDP release and GTP hydrolysis are modulated by numerous regulatory proteins. Signaling is mediated via effector proteins, such as adenylate cyclase. Inhibits adenylate cyclase activity of ADCY1, ADCY5 and ADCY6, leading to decreased intracellular cAMP levels. The inactive GDP-bound form prevents the association of RGS14 with centrosomes and is required for the translocation of RGS14 from the cytoplasm to the plasma membrane. Required for normal cytokinesis during mitosis. Required for cortical dynein-dynactin complex recruitment during metaphase. This Pongo abelii (Sumatran orangutan) protein is Guanine nucleotide-binding protein G(i) subunit alpha-1 (GNAI1).